Consider the following 600-residue polypeptide: Proline--tRNA ligase (600 aa).

Belongs to the class-II aminoacyl-tRNA synthetase family. ProS type 1 subfamily. As to quaternary structure, homodimer.

It is found in the cytoplasm. It carries out the reaction tRNA(Pro) + L-proline + ATP = L-prolyl-tRNA(Pro) + AMP + diphosphate. Functionally, catalyzes the attachment of proline to tRNA(Pro) in a two-step reaction: proline is first activated by ATP to form Pro-AMP and then transferred to the acceptor end of tRNA(Pro). As ProRS can inadvertently accommodate and process non-cognate amino acids such as alanine and cysteine, to avoid such errors it has two additional distinct editing activities against alanine. One activity is designated as 'pretransfer' editing and involves the tRNA(Pro)-independent hydrolysis of activated Ala-AMP. The other activity is designated 'posttransfer' editing and involves deacylation of mischarged Ala-tRNA(Pro). The misacylated Cys-tRNA(Pro) is not edited by ProRS. The protein is Proline--tRNA ligase of Synechococcus sp. (strain ATCC 27144 / PCC 6301 / SAUG 1402/1) (Anacystis nidulans).